A 209-amino-acid polypeptide reads, in one-letter code: Redox-sensing transcriptional repressor Rex (209 aa).

A DNA-binding region (H-T-H motif) is located at residues 16–55 (LYYRFIQNLSLSGKQRVSSAELSEAVKVDSATIRRDFSYF). 90 to 95 (GVGNLG) contributes to the NAD(+) binding site.

It belongs to the transcriptional regulatory Rex family. As to quaternary structure, homodimer.

The protein resides in the cytoplasm. In terms of biological role, modulates transcription in response to changes in cellular NADH/NAD(+) redox state. The sequence is that of Redox-sensing transcriptional repressor Rex from Bacillus thuringiensis (strain Al Hakam).